Reading from the N-terminus, the 168-residue chain is I-Kappa-B like protein G2 (168 aa).

2 ANK repeats span residues S56–G88 and G93–A123.

This sequence belongs to the polydnaviridae I-Kappa-B-like protein family.

Its function is as follows. Suppresses the host immune response through NF-kappa-B inactivation. Possesses ankyrin repeat domains required for NF-kappa-B binding but lacks the regulatory regions required for dissociation from NF-kappa-B and degradation. Therefore, prevents host NF-kappa-B release and subsequent activation. In Microplitis demolitor (Parasitoid wasp), this protein is I-Kappa-B like protein G2 (G4).